Reading from the N-terminus, the 521-residue chain is GMC-type oxidoreductase acuG (521 aa).

FAD is bound by residues Thr-14–Val-15, Glu-34–Ala-35, Leu-82, Asn-90–Leu-93, Ala-492, and Tyr-503–Gln-504.

It belongs to the GMC oxidoreductase family. Requires FAD as cofactor.

The protein operates within secondary metabolite biosynthesis. GMC-type oxidoreductase; part of the gene cluster that mediates the biosynthesis of aculins. The pathway begins with the synthesis of 6-methylsalicylic acid by the polyketide synthase (PKS) acuA via condensation of acetate and malonate units. The 6-methylsalicylic acid decarboxylase acuB then catalyzes the decarboxylation of 6-methylsalicylic acid to yield m-cresol (also known as 3-methylphenol). These first reactions occur in the cytosol. The intermediate m-cresol is then transported into the endoplasmic reticulum where the cytochrome P450 monooxygenase acuC converts it to m-hydroxybenzyl alcohol, which is further converted to gentisyl alcohol by the cytochrome P450 monooxygenase acuD. Gentisyl alcohol is further oxidized by the oxidoreductase acuE that probably catalyzes hydroxylation of the aromatic ring. The aromatic system might then be opened by oxidation through a Baeyer-Villiger type of oxidation, which could be catalyzed by acuF, with the carboxylic acid at C-1 subsequently reduced to an aldehyde by acuG. Subsequently, a hemiacetal is formed, before the dehydrogenase acuH would reduce the double bond between C-4 and C-6. Finally, keto-enol tautomerism results in formation of aculinic acid, which exists as two diastereomers (both R/S configurations at C-1) by non-enzymatic hemiacetal formation. The carboxypeptidase acuI could be involved in the linking of aculinic acid to an aculene A moiety produced by the aculene biosynthesis cluster and which leads to the production of aculin A. AcuI may also be involved in the attachment of proline to aculinic acid to form epi-aculins A and B. This is GMC-type oxidoreductase acuG from Aspergillus aculeatus (strain ATCC 16872 / CBS 172.66 / WB 5094).